Here is a 443-residue protein sequence, read N- to C-terminus: ATP-dependent protease ATPase subunit HslU (443 aa).

Residues isoleucine 18, 60-65, aspartate 256, glutamate 321, and arginine 393 each bind ATP; that span reads GVGKTE.

The protein belongs to the ClpX chaperone family. HslU subfamily. A double ring-shaped homohexamer of HslV is capped on each side by a ring-shaped HslU homohexamer. The assembly of the HslU/HslV complex is dependent on binding of ATP.

The protein resides in the cytoplasm. Its function is as follows. ATPase subunit of a proteasome-like degradation complex; this subunit has chaperone activity. The binding of ATP and its subsequent hydrolysis by HslU are essential for unfolding of protein substrates subsequently hydrolyzed by HslV. HslU recognizes the N-terminal part of its protein substrates and unfolds these before they are guided to HslV for hydrolysis. This chain is ATP-dependent protease ATPase subunit HslU, found in Shigella boydii serotype 18 (strain CDC 3083-94 / BS512).